Here is a 1174-residue protein sequence, read N- to C-terminus: RecBCD enzyme subunit RecB (1174 aa).

A DNA-binding and helicase activity, interacts with RecC region spans residues 1–852; that stretch reads MKIDSLKEKL…GGKTMNYEGL (852 aa). The UvrD-like helicase ATP-binding domain occupies 4–449; sequence DSLKEKLNIF…YYLDTNWRSS (446 aa). Residue 25 to 32 participates in ATP binding; the sequence is ASAGTGKT. Positions 479–745 constitute a UvrD-like helicase C-terminal domain; that stretch reads PSSKNLKMNF…KIITIHKSKG (267 aa). The segment at 900-1174 is nuclease activity, interacts with RecD and RecA; the sequence is TWSITSFSQL…LIKKTMTLIS (275 aa). Mg(2+)-binding residues include H957, D1068, and D1081. D1081 functions as the For nuclease activity in the catalytic mechanism.

It belongs to the helicase family. UvrD subfamily. Heterotrimer of RecB, RecC and RecD. All subunits contribute to DNA-binding. Interacts with RecA. It depends on Mg(2+) as a cofactor.

It carries out the reaction Exonucleolytic cleavage (in the presence of ATP) in either 5'- to 3'- or 3'- to 5'-direction to yield 5'-phosphooligonucleotides.. The enzyme catalyses Couples ATP hydrolysis with the unwinding of duplex DNA by translocating in the 3'-5' direction.. The catalysed reaction is ATP + H2O = ADP + phosphate + H(+). A helicase/nuclease that prepares dsDNA breaks (DSB) for recombinational DNA repair. Binds to DSBs and unwinds DNA via a highly rapid and processive ATP-dependent bidirectional helicase activity. Unwinds dsDNA until it encounters a Chi (crossover hotspot instigator) sequence from the 3' direction. Cuts ssDNA a few nucleotides 3' to the Chi site. The properties and activities of the enzyme are changed at Chi. The Chi-altered holoenzyme produces a long 3'-ssDNA overhang and facilitates RecA-binding to the ssDNA for homologous DNA recombination and repair. Holoenzyme degrades any linearized DNA that is unable to undergo homologous recombination. In the holoenzyme this subunit contributes ATPase, 3'-5' helicase, exonuclease activity and loads RecA onto ssDNA. The chain is RecBCD enzyme subunit RecB from Buchnera aphidicola subsp. Acyrthosiphon pisum (strain APS) (Acyrthosiphon pisum symbiotic bacterium).